Reading from the N-terminus, the 225-residue chain is Ribonuclease 3 (225 aa).

The RNase III domain occupies methionine 7 to glycine 132. Position 45 (glutamate 45) interacts with Mg(2+). Aspartate 49 is a catalytic residue. Mg(2+) is bound by residues aspartate 118 and glutamate 121. Glutamate 121 is a catalytic residue. Residues aspartate 157–aspartate 225 form the DRBM domain.

It belongs to the ribonuclease III family. Homodimer. The cofactor is Mg(2+).

It localises to the cytoplasm. It carries out the reaction Endonucleolytic cleavage to 5'-phosphomonoester.. In terms of biological role, digests double-stranded RNA. Involved in the processing of primary rRNA transcript to yield the immediate precursors to the large and small rRNAs (23S and 16S). Processes some mRNAs, and tRNAs when they are encoded in the rRNA operon. Processes pre-crRNA and tracrRNA of type II CRISPR loci if present in the organism. The protein is Ribonuclease 3 of Ruegeria pomeroyi (strain ATCC 700808 / DSM 15171 / DSS-3) (Silicibacter pomeroyi).